The following is a 132-amino-acid chain: MWNEFKKFAFKGNVIDLAVGVVIGAAFGKIVSSLVKDIITPLLGMVLGGVDFTDLKITFGKSSIMYGNFIQTIFDFLIIAAAIFMFVKVFNKLTSKREEEKEEEIPEPTKEEELLGEIRDLLKQQNSSKDRA.

2 helical membrane-spanning segments follow: residues 14–34 and 67–87; these read VIDL…VSSL and GNFI…FMFV.

This sequence belongs to the MscL family. Homopentamer.

The protein localises to the cell membrane. In terms of biological role, channel that opens in response to stretch forces in the membrane lipid bilayer. May participate in the regulation of osmotic pressure changes within the cell. In Bacillus anthracis (strain A0248), this protein is Large-conductance mechanosensitive channel.